The primary structure comprises 418 residues: CinA-like protein (418 aa).

This sequence belongs to the CinA family.

In Cyanothece sp. (strain PCC 7425 / ATCC 29141), this protein is CinA-like protein.